The primary structure comprises 40 residues: Photosystem II reaction center protein J (40 aa).

A helical membrane pass occupies residues 8-28; that stretch reads IPLWIIGTGAGILVIGLIGIF.

It belongs to the PsbJ family. As to quaternary structure, PSII is composed of 1 copy each of membrane proteins PsbA, PsbB, PsbC, PsbD, PsbE, PsbF, PsbH, PsbI, PsbJ, PsbK, PsbL, PsbM, PsbT, PsbX, PsbY, PsbZ, Psb30/Ycf12, at least 3 peripheral proteins of the oxygen-evolving complex and a large number of cofactors. It forms dimeric complexes.

Its subcellular location is the plastid. It is found in the chloroplast thylakoid membrane. Its function is as follows. One of the components of the core complex of photosystem II (PSII). PSII is a light-driven water:plastoquinone oxidoreductase that uses light energy to abstract electrons from H(2)O, generating O(2) and a proton gradient subsequently used for ATP formation. It consists of a core antenna complex that captures photons, and an electron transfer chain that converts photonic excitation into a charge separation. In Aethionema grandiflorum (Persian stone-cress), this protein is Photosystem II reaction center protein J.